The sequence spans 325 residues: Lipoyl synthase (325 aa).

The [4Fe-4S] cluster site is built by Cys-68, Cys-73, Cys-79, Cys-94, Cys-98, Cys-101, and Ser-308. Residues 80-297 (FGGGTATFMI…ARVANELGFT (218 aa)) form the Radical SAM core domain.

This sequence belongs to the radical SAM superfamily. Lipoyl synthase family. [4Fe-4S] cluster is required as a cofactor.

The protein localises to the cytoplasm. It catalyses the reaction [[Fe-S] cluster scaffold protein carrying a second [4Fe-4S](2+) cluster] + N(6)-octanoyl-L-lysyl-[protein] + 2 oxidized [2Fe-2S]-[ferredoxin] + 2 S-adenosyl-L-methionine + 4 H(+) = [[Fe-S] cluster scaffold protein] + N(6)-[(R)-dihydrolipoyl]-L-lysyl-[protein] + 4 Fe(3+) + 2 hydrogen sulfide + 2 5'-deoxyadenosine + 2 L-methionine + 2 reduced [2Fe-2S]-[ferredoxin]. The protein operates within protein modification; protein lipoylation via endogenous pathway; protein N(6)-(lipoyl)lysine from octanoyl-[acyl-carrier-protein]: step 2/2. Functionally, catalyzes the radical-mediated insertion of two sulfur atoms into the C-6 and C-8 positions of the octanoyl moiety bound to the lipoyl domains of lipoate-dependent enzymes, thereby converting the octanoylated domains into lipoylated derivatives. This is Lipoyl synthase from Alcanivorax borkumensis (strain ATCC 700651 / DSM 11573 / NCIMB 13689 / SK2).